Reading from the N-terminus, the 352-residue chain is Divinyl chlorophyll a/b light-harvesting protein PcbH (352 aa).

A run of 6 helical transmembrane segments spans residues Phe27–Leu47, Val88–Ala108, Phe140–Ala160, Val202–Ala222, Ala242–Ala262, and Leu309–Leu329.

Belongs to the PsbB/PsbC family. IsiA/Pcb subfamily. The antenna complex consists of divinyl chlorophylls (a and b) and divinyl chlorophyll a/b binding proteins and binds more divinyl chlorophyll b than does the antenna complex from high-light-adapted Prochlorococcus. Divinyl chlorophyll a is required as a cofactor. The cofactor is divinyl chlorophyll b.

It localises to the cellular thylakoid membrane. In terms of biological role, the antenna complex functions as a light receptor, it captures and delivers excitation energy to photosystems II and I. The Prochlorales pcb genes are not related to higher plant LHCs. In Prochlorococcus marinus (strain SARG / CCMP1375 / SS120), this protein is Divinyl chlorophyll a/b light-harvesting protein PcbH (pcbH).